Consider the following 251-residue polypeptide: Aspartate/glutamate leucyltransferase (251 aa).

The protein belongs to the R-transferase family. Bpt subfamily.

The protein localises to the cytoplasm. The catalysed reaction is N-terminal L-glutamyl-[protein] + L-leucyl-tRNA(Leu) = N-terminal L-leucyl-L-glutamyl-[protein] + tRNA(Leu) + H(+). It catalyses the reaction N-terminal L-aspartyl-[protein] + L-leucyl-tRNA(Leu) = N-terminal L-leucyl-L-aspartyl-[protein] + tRNA(Leu) + H(+). Its function is as follows. Functions in the N-end rule pathway of protein degradation where it conjugates Leu from its aminoacyl-tRNA to the N-termini of proteins containing an N-terminal aspartate or glutamate. The chain is Aspartate/glutamate leucyltransferase from Xanthomonas euvesicatoria pv. vesicatoria (strain 85-10) (Xanthomonas campestris pv. vesicatoria).